The primary structure comprises 193 residues: ATP-dependent Clp protease proteolytic subunit (193 aa).

Ser98 functions as the Nucleophile in the catalytic mechanism. His123 is a catalytic residue.

It belongs to the peptidase S14 family. As to quaternary structure, fourteen ClpP subunits assemble into 2 heptameric rings which stack back to back to give a disk-like structure with a central cavity, resembling the structure of eukaryotic proteasomes.

The protein localises to the cytoplasm. It catalyses the reaction Hydrolysis of proteins to small peptides in the presence of ATP and magnesium. alpha-casein is the usual test substrate. In the absence of ATP, only oligopeptides shorter than five residues are hydrolyzed (such as succinyl-Leu-Tyr-|-NHMec, and Leu-Tyr-Leu-|-Tyr-Trp, in which cleavage of the -Tyr-|-Leu- and -Tyr-|-Trp bonds also occurs).. Cleaves peptides in various proteins in a process that requires ATP hydrolysis. Has a chymotrypsin-like activity. Plays a major role in the degradation of misfolded proteins. The sequence is that of ATP-dependent Clp protease proteolytic subunit from Mannheimia succiniciproducens (strain KCTC 0769BP / MBEL55E).